A 218-amino-acid chain; its full sequence is MLGFLEKVADYTKEAVSAAKYLVDGLGVTFDHMRRRPVTVQYPYEKLIPSERYRGRIHYEFDKCIACEVCVRVCPINLPVVDWVMNKETKKKELRNYSIDFGACIFCGNCVEYCPTNCLSMTEEYELSAFDRHSLNYDNVALGRLPTSVTSDPSVRPLRELPYLPKGIMDPHELPANQQRAGKLPSQIIKELQAEKSEEKGNNNSSDIVPNKLNSTNK.

4Fe-4S ferredoxin-type domains follow at residues 55–84 (GRIH…VDWV) and 95–124 (RNYS…MTEE). Residues cysteine 64, cysteine 67, cysteine 70, cysteine 74, cysteine 104, cysteine 107, cysteine 110, and cysteine 114 each contribute to the [4Fe-4S] cluster site. The segment at 169–218 (MDPHELPANQQRAGKLPSQIIKELQAEKSEEKGNNNSSDIVPNKLNSTNK) is disordered. The span at 192–201 (LQAEKSEEKG) shows a compositional bias: basic and acidic residues. The span at 202-218 (NNNSSDIVPNKLNSTNK) shows a compositional bias: polar residues.

The protein belongs to the complex I 23 kDa subunit family. As to quaternary structure, NDH-1 is composed of at least 11 different subunits. The cofactor is [4Fe-4S] cluster.

The protein localises to the cellular thylakoid membrane. It carries out the reaction a plastoquinone + NADH + (n+1) H(+)(in) = a plastoquinol + NAD(+) + n H(+)(out). The enzyme catalyses a plastoquinone + NADPH + (n+1) H(+)(in) = a plastoquinol + NADP(+) + n H(+)(out). In terms of biological role, NDH-1 shuttles electrons from an unknown electron donor, via FMN and iron-sulfur (Fe-S) centers, to quinones in the respiratory and/or the photosynthetic chain. The immediate electron acceptor for the enzyme in this species is believed to be plastoquinone. Couples the redox reaction to proton translocation, and thus conserves the redox energy in a proton gradient. In Prochlorococcus marinus (strain NATL1A), this protein is NAD(P)H-quinone oxidoreductase subunit I.